Reading from the N-terminus, the 293-residue chain is Histamine N-methyltransferase B (293 aa).

Glutamate 28 contacts substrate. The S-adenosyl-L-methionine site is built by glycine 60, glutamate 89, glutamine 94, serine 120, and isoleucine 142. Asparagine 283 is a binding site for substrate.

Belongs to the class I-like SAM-binding methyltransferase superfamily. HNMT family. As to quaternary structure, monomer.

Its subcellular location is the cytoplasm. The enzyme catalyses histamine + S-adenosyl-L-methionine = N(tau)-methylhistamine + S-adenosyl-L-homocysteine + H(+). Its function is as follows. Inactivates histamine by N-methylation. Plays an important role in degrading histamine and in regulating the airway response to histamine. The sequence is that of Histamine N-methyltransferase B (hnmt-b) from Xenopus laevis (African clawed frog).